Here is a 544-residue protein sequence, read N- to C-terminus: Chromatin assembly factor 1 subunit A (544 aa).

Residues 1 to 22 (MNSESVDSDVAASTSNKGNELC) show a composition bias toward polar residues. 3 disordered regions span residues 1 to 52 (MNSE…EADE), 67 to 117 (IYNG…REQE), and 138 to 160 (QEQQ…AQRL). Low complexity predominate over residues 23–35 (SSSTDITSLSVSS). Residues 36 to 47 (PNESVIHSSHSA) are compositionally biased toward polar residues. An interaction with DNA and pcn1/PCNA region spans residues 56–170 (KLSYEGNRKK…RQEQILNKER (115 aa)). Residues 74 to 117 (AGKEKKLQKQRAQEERIRQKEAERLKREKERQQREQEKKLREQE) show a composition bias toward basic and acidic residues. A coiled-coil region spans residues 76–176 (KEKKLQKQRA…NKERQQLKLN (101 aa)). The PCNA-interaction protein (PIP box) signature appears at 172–179 (QLKLNNFF). Residues 325 to 396 (SNVLLNPWLE…DKDSVNASNT (72 aa)) are interaction with histones H3/H4. Acidic residues predominate over residues 351 to 388 (DEEDDGEDLESEDEEVDNSDDIVEDGDNAFVDDEDDDK). The disordered stretch occupies residues 351 to 400 (DEEDDGEDLESEDEEVDNSDDIVEDGDNAFVDDEDDDKDSVNASNTHRSS).

Belongs to the RLF2 family. As to quaternary structure, component of chromatin assembly factor 1 (CAF-1), composed of pcf1, pcf2 and pcf3. Interacts (via PIP motif) with pcn1/PCNA; the interaction is direct and occurs during S-phase. Interacts with swi6 at the G1/S-phase transition and early S-phase, but not in the G2 phase. The CAF-1 complex interacts with histone H3/H4 dimers.

It is found in the nucleus. Its function is as follows. Acts as a component of the histone chaperone complex chromatin assembly factor 1 (CAF-1), which assembles histone octamers onto DNA during replication and repair. CAF-1 performs the first step of the nucleosome assembly process, bringing newly synthesized histones H3 and H4 to replicating DNA; histones H2A/H2B can bind to this chromatin precursor subsequent to DNA replication to complete the histone octamer. Plays a role in the maintenance of heterochromatin. This chain is Chromatin assembly factor 1 subunit A, found in Schizosaccharomyces pombe (strain 972 / ATCC 24843) (Fission yeast).